The following is an 821-amino-acid chain: Calpain-3 (821 aa).

Positions 1–34 are disordered; that stretch reads MPTVISASMAPRTGASQVPRTMPQAAQGKGTEAG. The Calpain catalytic domain occupies 73–417; that stretch reads LYLDPEFPPD…FTKLEICNLT (345 aa). Residues Cys-128, His-334, and Asn-358 contribute to the active site. Residues 418–586 form a domain III region; the sequence is ADALESDKLQ…KRNLSEEVEN (169 aa). A linker region spans residues 587–649; sequence TISVDRPVRK…EPSNTDQESE (63 aa). The disordered stretch occupies residues 603-652; sequence IFVSDRANSNKELGVDQESEEGQDKTSPDKQEKSPKPEPSNTDQESEEQQ. Basic and acidic residues predominate over residues 624 to 638; it reads GQDKTSPDKQEKSPK. Polar residues predominate over residues 641–652; it reads PSNTDQESEEQQ. 4 consecutive EF-hand domains span residues 649–683, 692–725, 722–757, and 787–821; these read EEQQ…VVNK, FTLE…KKIK, KKIK…AGFH, and VRLE…TMYA. Residues 650–821 form a domain IV region; sequence EQQQFRNIFR…LEWLQLTMYA (172 aa). Ca(2+) is bound by residues Ala-662, Asp-665, Glu-667, Glu-672, Asp-705, Asp-707, Ser-709, Arg-711, Glu-716, Asp-735, Asp-737, Ser-739, Thr-741, Glu-746, Asp-800, Asp-802, Asp-804, and Ile-806.

The protein belongs to the peptidase C2 family. As to quaternary structure, homodimer; via EF-hand domain 4. Interacts with TTN/titin. Interacts with CMYA5; this interaction, which results in CMYA5 proteolysis, may protect CAPN3 from autolysis. Interacts with SIMC1. Interacts with UTP25; the interaction is required for CAPN3 translocation to the nucleolus. In terms of tissue distribution, skeletal muscle.

It is found in the cytoplasm. The protein localises to the nucleus. The protein resides in the nucleolus. It carries out the reaction Broad endopeptidase activity.. With respect to regulation, activated by micromolar concentrations of calcium and inhibited by calpastatin. Functionally, calcium-regulated non-lysosomal thiol-protease. Proteolytically cleaves CTBP1. Mediates, with UTP25, the proteasome-independent degradation of p53/TP53. The sequence is that of Calpain-3 (CAPN3) from Sus scrofa (Pig).